A 64-amino-acid chain; its full sequence is Large ribosomal subunit protein bL35 (64 aa).

Residues 38–53 (KRKANLNAPKHVHHTN) show a composition bias toward basic residues. Positions 38-64 (KRKANLNAPKHVHHTNAHSVMSLLCRA) are disordered.

It belongs to the bacterial ribosomal protein bL35 family.

In Helicobacter pylori (strain G27), this protein is Large ribosomal subunit protein bL35.